The chain runs to 364 residues: MAQQTPLYEQHTLCGARMVDFHGWMMPLHYGSQIDEHHAVRTDAGMFDVSHMTIVDLRGSRTREFLRYLLANDVAKLTKSGKALYSGMLNASGGVIDDLIVYYFTEDFFRLVVNSATREKDLSWITQHAEPFGIEITVRDDLSMIAVQGPNAQAKAATLFNDAQRQAVEGMKPFFGVQAGDLFIATTGYTGEAGYEIALPNEKAADFWRALVEAGVKPCGLGARDTLRLEAGMNLYGQEMDETISPLAANMGWTIAWEPADRDFIGREALEVQREHGTEKLVGLVMTEKGVLRNELPVRFTDAQGNQHEGIITSGTFSPTLGYSIALARVPEGIGETAIVQIRNREMPVKVTKPVFVRNGKAVA.

It belongs to the GcvT family. As to quaternary structure, the glycine cleavage system is composed of four proteins: P, T, L and H.

The catalysed reaction is N(6)-[(R)-S(8)-aminomethyldihydrolipoyl]-L-lysyl-[protein] + (6S)-5,6,7,8-tetrahydrofolate = N(6)-[(R)-dihydrolipoyl]-L-lysyl-[protein] + (6R)-5,10-methylene-5,6,7,8-tetrahydrofolate + NH4(+). The glycine cleavage system catalyzes the degradation of glycine. The protein is Aminomethyltransferase of Escherichia coli (strain 55989 / EAEC).